The sequence spans 496 residues: L-arabinose isomerase (496 aa).

Mn(2+) contacts are provided by Glu305, Glu330, His347, and His446.

Belongs to the arabinose isomerase family. Requires Mn(2+) as cofactor.

It carries out the reaction beta-L-arabinopyranose = L-ribulose. It participates in carbohydrate degradation; L-arabinose degradation via L-ribulose; D-xylulose 5-phosphate from L-arabinose (bacterial route): step 1/3. In terms of biological role, catalyzes the conversion of L-arabinose to L-ribulose. In Bacillus subtilis (strain 168), this protein is L-arabinose isomerase.